The following is a 157-amino-acid chain: Endoribonuclease YbeY (157 aa).

Zn(2+) is bound by residues His116, His120, and His126.

Belongs to the endoribonuclease YbeY family. Zn(2+) is required as a cofactor.

The protein resides in the cytoplasm. In terms of biological role, single strand-specific metallo-endoribonuclease involved in late-stage 70S ribosome quality control and in maturation of the 3' terminus of the 16S rRNA. This Paenarthrobacter aurescens (strain TC1) protein is Endoribonuclease YbeY.